Consider the following 152-residue polypeptide: Diamine acetyltransferase (152 aa).

In terms of domain architecture, N-acetyltransferase spans Phe-5 to Asp-152. Tyr-127 acts as the Proton donor in catalysis.

Belongs to the acetyltransferase family. Homotetramer.

Its subcellular location is the cytoplasm. It catalyses the reaction an alkane-alpha,omega-diamine + acetyl-CoA = an N-acetylalkane-alpha,omega-diamine + CoA + H(+). Its pathway is amine and polyamine degradation; putrescine degradation; N-acetylputrescine from putrescine: step 1/1. Its function is as follows. Enzyme which catalyzes the acetylation of polyamines. Displays higher substrate specificity for spermine than for spermidine. May function to acetylate host-derived polyamines, thus alleviating the necessity for de novo synthesis of these molecules. This Cryptosporidium parvum (strain Iowa II) protein is Diamine acetyltransferase.